The sequence spans 229 residues: Cytochrome c oxidase subunit 2 (229 aa).

Over 1 to 26 the chain is Mitochondrial intermembrane; it reads MSTWANLGLQDSASPLMEQLIFFHDH. Residues 27 to 48 traverse the membrane as a helical segment; it reads ALLILVMITVLVGYLMFMLFFN. Residues 49–62 are Mitochondrial matrix-facing; that stretch reads SYVNRFLLHGQLIE. The chain crosses the membrane as a helical span at residues 63 to 82; it reads MIWTILPAIILLFIAMPSLR. Topologically, residues 83–229 are mitochondrial intermembrane; that stretch reads LLYLLDEINE…IKWISNSVNS (147 aa). Residues His161, Cys196, Glu198, Cys200, His204, and Met207 each coordinate Cu cation. Residue Glu198 participates in Mg(2+) binding.

Belongs to the cytochrome c oxidase subunit 2 family. As to quaternary structure, component of the cytochrome c oxidase (complex IV, CIV), a multisubunit enzyme composed of a catalytic core of 3 subunits and several supernumerary subunits. The complex exists as a monomer or a dimer and forms supercomplexes (SCs) in the inner mitochondrial membrane with ubiquinol-cytochrome c oxidoreductase (cytochrome b-c1 complex, complex III, CIII). Requires Cu cation as cofactor.

It is found in the mitochondrion inner membrane. The catalysed reaction is 4 Fe(II)-[cytochrome c] + O2 + 8 H(+)(in) = 4 Fe(III)-[cytochrome c] + 2 H2O + 4 H(+)(out). In terms of biological role, component of the cytochrome c oxidase, the last enzyme in the mitochondrial electron transport chain which drives oxidative phosphorylation. The respiratory chain contains 3 multisubunit complexes succinate dehydrogenase (complex II, CII), ubiquinol-cytochrome c oxidoreductase (cytochrome b-c1 complex, complex III, CIII) and cytochrome c oxidase (complex IV, CIV), that cooperate to transfer electrons derived from NADH and succinate to molecular oxygen, creating an electrochemical gradient over the inner membrane that drives transmembrane transport and the ATP synthase. Cytochrome c oxidase is the component of the respiratory chain that catalyzes the reduction of oxygen to water. Electrons originating from reduced cytochrome c in the intermembrane space (IMS) are transferred via the dinuclear copper A center (CU(A)) of subunit 2 and heme A of subunit 1 to the active site in subunit 1, a binuclear center (BNC) formed by heme A3 and copper B (CU(B)). The BNC reduces molecular oxygen to 2 water molecules using 4 electrons from cytochrome c in the IMS and 4 protons from the mitochondrial matrix. The sequence is that of Cytochrome c oxidase subunit 2 (mt:CoII) from Drosophila affinis (Fruit fly).